Reading from the N-terminus, the 438-residue chain is MSTTKVKRRVGKYELGRTIGEGTFAKVKFARDTETGDPVAIKILDKEKVLKHKMVEQIKREISTMKLIKHPNVVRIYEVMGSKTKIYIVLEYVTGGELFDTIVNHGRMREDEARRYFQQLINAVDYCHSRGVYHRDLKPENLLLDSYGNLKVSDFGLSALSQQIKDDGLLHTTCGTPNYVAPEVLEDQGYDGAMADLWSCGVILFVLLAGYLPFEDSNLMTLYKKISNAEFTFPPWTSFPAKRLLTRILDPNPMTRVTIPEILEDEWFKKGYKRPEFDEKYDTTLDDVYAVFNDSEEHHVTEKKEEPEALNAFELISMSAGLNLGNLFDSEQEFKRETRFTSKCPPKEIVRKIEEAAKPLGFDVQKKNYKLRLEKVKAGRKGNLNVATEILQVAPSLHMVEVRKAKGDTLEFHKFYKNLSRTLKDVVWKSDDLQNQLS.

Residues 13 to 268 form the Protein kinase domain; it reads YELGRTIGEG…IPEILEDEWF (256 aa). ATP-binding positions include 19–27 and lysine 42; that span reads IGEGTFAKV. The Proton acceptor role is filled by aspartate 136. An activation loop region spans residues 154–183; the sequence is DFGLSALSQQIKDDGLLHTTCGTPNYVAPE. Positions 305–329 constitute an NAF domain; that stretch reads EEPEALNAFELISMSAGLNLGNLFD. The interval 335–364 is PPI; the sequence is KRETRFTSKCPPKEIVRKIEEAAKPLGFDV.

The protein belongs to the protein kinase superfamily. CAMK Ser/Thr protein kinase family. SNF1 subfamily. It depends on Mn(2+) as a cofactor.

The enzyme catalyses L-seryl-[protein] + ATP = O-phospho-L-seryl-[protein] + ADP + H(+). The catalysed reaction is L-threonyl-[protein] + ATP = O-phospho-L-threonyl-[protein] + ADP + H(+). CIPK serine-threonine protein kinases interact with CBL proteins. Binding of a CBL protein to the regulatory NAF domain of CIPK protein lead to the activation of the kinase in a calcium-dependent manner. This chain is CBL-interacting protein kinase 32 (CIPK32), found in Oryza sativa subsp. japonica (Rice).